The chain runs to 479 residues: Flavonol 3-O-glucosyltransferase UGT71C4 (479 aa).

The Proton acceptor role is filled by His-17. His-17 provides a ligand contact to an anthocyanidin. Catalysis depends on Asp-127, which acts as the Charge relay. UDP-alpha-D-glucose is bound by residues Thr-150, Ala-350, Gln-352, His-367, Trp-370, Asn-371, Ser-372, and Glu-375. Residue Ala-390 participates in an anthocyanidin binding. The UDP-alpha-D-glucose site is built by Glu-391 and Gln-392.

This sequence belongs to the UDP-glycosyltransferase family.

It catalyses the reaction a flavonol + UDP-alpha-D-glucose = a flavonol 3-O-beta-D-glucoside + UDP + H(+). The enzyme catalyses a 7-O-hydroxy-flavonol + UDP-alpha-D-glucose = a flavonol 7-O-beta-D-glucoside + UDP + H(+). Its function is as follows. Possesses quercetin 3-O-glucosyltransferase and 7-O-glucosyltransferase activities in vitro. Also active in vitro on benzoates and benzoate derivatives. This chain is Flavonol 3-O-glucosyltransferase UGT71C4, found in Arabidopsis thaliana (Mouse-ear cress).